Consider the following 171-residue polypeptide: UPF0398 protein Sez_1569 (171 aa).

This sequence belongs to the UPF0398 family.

The polypeptide is UPF0398 protein Sez_1569 (Streptococcus equi subsp. zooepidemicus (strain MGCS10565)).